A 311-amino-acid polypeptide reads, in one-letter code: MAVQGGLLSLWLWLWLSLLTVLLGARARWRGEGTTPHLQSIFLGRCAEYTTLLSLGNKNCTAIWEAFKGVLDKDPCSVLPSDYDLFINLSRHPIPRDKSLFWENNHLLVMSYGENTRRLVALCDVLYGKVGDFLSWCRQENASGLDYQSCPTSEDCENNAVDSYWKSASMQYSRDSSGVINVMLNGSEPKGAYPTRGFFADFEIPYLQKDKVTRIEIWVMHDVGGPNVESCGEGSVKILEDRLEALGFQHSCINDYRPVKFLMCVDHSTHPDCIMNSASASMRRESASLHAIGDASLLISLLVALASSSQA.

Positions 1–24 (MAVQGGLLSLWLWLWLSLLTVLLG) are cleaved as a signal peptide. Disulfide bonds link cysteine 46/cysteine 60, cysteine 76/cysteine 156, and cysteine 137/cysteine 150. Asparagine 59 and asparagine 88 each carry an N-linked (GlcNAc...) asparagine glycan. Residue tryptophan 102 coordinates NAD(+). Tryptophan 102 is a binding site for nicotinamide. Asparagine 141 carries N-linked (GlcNAc...) asparagine glycosylation. Residue tryptophan 165 participates in NAD(+) binding. An N-linked (GlcNAc...) asparagine glycan is attached at asparagine 185. Residue glutamate 203 participates in NAD(+) binding. 2 cysteine pairs are disulfide-bonded: cysteine 231–cysteine 252 and cysteine 264–cysteine 273. Serine 286 carries the GPI-anchor amidated serine lipid modification. Positions 287 to 311 (ASLHAIGDASLLISLLVALASSSQA) are excised as a propeptide.

The protein belongs to the ADP-ribosyl cyclase family. As to quaternary structure, homodimer. Expressed in the bone marrow, spleen and thymus in lymphoid organs, and the lung, kidney and heart in non-lymphoid organs.

The protein localises to the cell membrane. The catalysed reaction is NAD(+) + H2O = ADP-D-ribose + nicotinamide + H(+). It catalyses the reaction NAD(+) = cyclic ADP-beta-D-ribose + nicotinamide + H(+). It carries out the reaction cyclic ADP-beta-D-ribose + H2O = ADP-D-ribose. Its function is as follows. Catalyzes both the synthesis of cyclic ADP-beta-D-ribose (cADPR) from NAD(+), and its hydrolysis to ADP-D-ribose (ADPR). Cyclic ADPR is known to serve as an endogenous second messenger that elicits calcium release from intracellular stores, and thus regulates the mobilization of intracellular calcium. May be involved in pre-B-cell growth. The sequence is that of ADP-ribosyl cyclase/cyclic ADP-ribose hydrolase 2 (Bst1) from Mus musculus (Mouse).